The chain runs to 153 residues: MLRLRSGLRHLRATPNTRGSARLLCAEMPKKAGATTKGKSQSKEPERPLPPLGPVAVDPKGCVTIAIHAKPGSKQNAVTDLTAEAVNVAIAAPPSEGEANAELCRYLSKVLELRKSDVVLDKGGKSREKVVKLLASTTPEEILEKLKKEAKKT.

Residues 1–12 are compositionally biased toward basic residues; the sequence is MLRLRSGLRHLR. The interval 1 to 55 is disordered; it reads MLRLRSGLRHLRATPNTRGSARLLCAEMPKKAGATTKGKSQSKEPERPLPPLGPV. The residue at position 116 (S116) is a Phosphoserine.

The protein belongs to the UPF0235 family.

The chain is UPF0235 protein C15orf40 (C15orf40) from Homo sapiens (Human).